The chain runs to 246 residues: Major prion protein (246 aa).

The signal sequence occupies residues Met-1–Cys-15. The interval Lys-16–Ser-223 is interaction with GRB2, ERI3 and SYN1. The disordered stretch occupies residues Arg-18–Met-102. 5 consecutive repeat copies span residues Pro-44–Gln-52, Pro-53–Gln-60, Pro-61–Gln-68, Pro-69–Gln-76, and Pro-77–Gln-84. The segment at Pro-44–Gln-84 is 5 X 8 AA tandem repeats of P-H-G-G-G-W-G-Q. Residues Gln-45 to Thr-88 are compositionally biased toward gly residues. Cu(2+)-binding residues include His-54, Gly-55, Gly-56, His-62, Gly-63, Gly-64, His-70, Gly-71, Gly-72, His-78, Gly-79, and Gly-80. The segment covering Gln-91–Met-102 has biased composition (basic residues). A disulfide bridge connects residues Cys-172 and Cys-207. N-linked (GlcNAc...) asparagine glycosylation is found at Asn-174 and Asn-190. Ser-223 is lipidated: GPI-anchor amidated serine. Residues Ser-224–Gly-246 constitute a propeptide, removed in mature form.

Belongs to the prion family. Monomer and homodimer. Has a tendency to aggregate into amyloid fibrils containing a cross-beta spine, formed by a steric zipper of superposed beta-strands. Soluble oligomers may represent an intermediate stage on the path to fibril formation. Copper binding may promote oligomerization. Interacts with GRB2, APP, ERI3/PRNPIP and SYN1. Mislocalized cytosolically exposed PrP interacts with MGRN1; this interaction alters MGRN1 subcellular location and causes lysosomal enlargement. Interacts with KIAA1191.

The protein localises to the cell membrane. It is found in the golgi apparatus. Its function is as follows. Its primary physiological function is unclear. Has cytoprotective activity against internal or environmental stresses. May play a role in neuronal development and synaptic plasticity. May be required for neuronal myelin sheath maintenance. May play a role in iron uptake and iron homeostasis. Soluble oligomers are toxic to cultured neuroblastoma cells and induce apoptosis (in vitro). Association with GPC1 (via its heparan sulfate chains) targets PRNP to lipid rafts. Also provides Cu(2+) or Zn(2+) for the ascorbate-mediated GPC1 deaminase degradation of its heparan sulfate side chains. The chain is Major prion protein (PRNP) from Cercopithecus mona (Mona monkey).